A 265-amino-acid chain; its full sequence is Undecaprenyl-diphosphatase (265 aa).

Transmembrane regions (helical) follow at residues 38–58 (RSDFFNIVIQAGAILAICLAL), 75–95 (RDYVLKVSVAFLVTAVVGLIV), 108–128 (PVAWALLIGGVWMLVAEHVAG), 135–155 (VVTWKVAIAVGLAQVVAGVFP), 181–201 (FVFMVGIPTMFAASGYALLEM), 215–235 (VAVAFVAATITGFVVVKWLLS), and 244–264 (VFAVYRIVLGAALLLWLPAAA).

This sequence belongs to the UppP family.

The protein resides in the cell inner membrane. It catalyses the reaction di-trans,octa-cis-undecaprenyl diphosphate + H2O = di-trans,octa-cis-undecaprenyl phosphate + phosphate + H(+). In terms of biological role, catalyzes the dephosphorylation of undecaprenyl diphosphate (UPP). Confers resistance to bacitracin. The protein is Undecaprenyl-diphosphatase of Xanthomonas oryzae pv. oryzae (strain MAFF 311018).